The primary structure comprises 655 residues: Cyclomaltodextrin glucanotransferase (655 aa).

An N-terminal signal peptide occupies residues Met1–Ala30. Ca(2+) is bound by residues Asp55, Asn60, Asn61, Gly79, and Asp81. A substrate-binding site is contributed by Tyr123–Trp124. Asn164 provides a ligand contact to Ca(2+). Substrate is bound by residues His165 and Asn217 to Asn220. Asp223 provides a ligand contact to Ca(2+). Arg251 contributes to the substrate binding site. The Nucleophile role is filled by Asp253. Lys256–His257 lines the substrate pocket. His257 contributes to the Ca(2+) binding site. Glu287 (proton donor) is an active-site residue. Positions 362, 436, and 440 each coordinate substrate. One can recognise a CBM20 domain in the interval Ala554 to Phe655. A disordered region spans residues Thr630–Phe655.

It belongs to the glycosyl hydrolase 13 family. As to quaternary structure, monomer. Requires Ca(2+) as cofactor.

It catalyses the reaction Cyclizes part of a (1-&gt;4)-alpha-D-glucan chain by formation of a (1-&gt;4)-alpha-D-glucosidic bond.. This Klebsiella oxytoca protein is Cyclomaltodextrin glucanotransferase (cgt).